A 734-amino-acid chain; its full sequence is Photosystem I P700 chlorophyll a apoprotein A2 (734 aa).

8 consecutive transmembrane segments (helical) span residues I46–A69, L135–Q158, L175–I199, M273–Y291, L330–Y353, A369–V395, A417–H439, and F517–V535. 2 residues coordinate [4Fe-4S] cluster: C559 and C568. The next 2 helical transmembrane spans lie at A575–W596 and L643–I665. Chlorophyll a is bound by residues H654, M662, and Y670. A phylloquinone-binding site is contributed by W671. The helical transmembrane segment at L707 to A727 threads the bilayer.

The protein belongs to the PsaA/PsaB family. The PsaA/B heterodimer binds the P700 chlorophyll special pair and subsequent electron acceptors. PSI consists of a core antenna complex that captures photons, and an electron transfer chain that converts photonic excitation into a charge separation. The eukaryotic PSI reaction center is composed of at least 11 subunits. P700 is a chlorophyll a/chlorophyll a' dimer, A0 is one or more chlorophyll a, A1 is one or both phylloquinones and FX is a shared 4Fe-4S iron-sulfur center. is required as a cofactor.

Its subcellular location is the plastid. It is found in the chloroplast thylakoid membrane. The catalysed reaction is reduced [plastocyanin] + hnu + oxidized [2Fe-2S]-[ferredoxin] = oxidized [plastocyanin] + reduced [2Fe-2S]-[ferredoxin]. Its function is as follows. PsaA and PsaB bind P700, the primary electron donor of photosystem I (PSI), as well as the electron acceptors A0, A1 and FX. PSI is a plastocyanin/cytochrome c6-ferredoxin oxidoreductase, converting photonic excitation into a charge separation, which transfers an electron from the donor P700 chlorophyll pair to the spectroscopically characterized acceptors A0, A1, FX, FA and FB in turn. Oxidized P700 is reduced on the lumenal side of the thylakoid membrane by plastocyanin or cytochrome c6. This chain is Photosystem I P700 chlorophyll a apoprotein A2, found in Porphyra purpurea (Red seaweed).